The chain runs to 49 residues: Large ribosomal subunit protein bL33 (49 aa).

This sequence belongs to the bacterial ribosomal protein bL33 family.

In Lachnoclostridium phytofermentans (strain ATCC 700394 / DSM 18823 / ISDg) (Clostridium phytofermentans), this protein is Large ribosomal subunit protein bL33.